The primary structure comprises 117 residues: MSWRGRSTYYWPRPRRYVQPPEMIGPMRPEQFSDEVEPATPEEGEPATQRQDPAAAQEGEDEGASAGQGPKPEADSQEQGHPQTGCECEDGPDGQEMDPPNPEEVKTPEEGEGQSQC.

The segment at 1–117 (MSWRGRSTYY…PEEGEGQSQC (117 aa)) is disordered. Acidic residues-rich tracts occupy residues 32–45 (FSDE…EEGE) and 87–96 (ECEDGPDGQE).

Belongs to the GAGE family. In terms of tissue distribution, expressed in a variety of tumor tissues but not in normal tissues, except testis.

In terms of biological role, antigen, recognized on melanoma by autologous cytolytic T-lymphocytes. The polypeptide is G antigen 1 (Homo sapiens (Human)).